The sequence spans 158 residues: uncharacterized protein (158 aa).

The protein belongs to the mimivirus L223/L227/L812 family.

This is an uncharacterized protein from Acanthamoeba polyphaga mimivirus (APMV).